A 560-amino-acid chain; its full sequence is DNA-directed primase/polymerase protein (560 aa).

A coiled-coil region spans residues 1–22 (MNRKWEAKLKQIEERASHYERK). Substrate contacts are provided by residues Arg76, 114–116 (DLE), and 165–169 (KFSRH). Residues Asp114 and Glu116 each contribute to the Mn(2+) site. The tract at residues 203 to 223 (EDDDSAPETTGHGFPHFSEAP) is disordered. Residue Ser255 is modified to Phosphoserine. Residues 288-291 (RNFR) and Lys297 each bind substrate. Residues Cys419, His426, Cys446, and Cys451 each coordinate Zn(2+). A Zinc knuckle motif motif is present at residues 419–452 (CENIGRAHKSNNIMILVDLKNEVWYQKCHDPVCK). A disordered region spans residues 480 to 507 (TTDEADETRSNETQNPHKPSPSRLSTGA). The interval 481–560 (TDEADETRSN…DELIIEVLQE (80 aa)) is interaction with RPA1. Polar residues predominate over residues 490–507 (NETQNPHKPSPSRLSTGA). 2 short sequence motifs (RPA1-binding motif) span residues 513-527 (WDNG…EATE) and 548-556 (EIPDELIIE).

It belongs to the eukaryotic-type primase small subunit family. Interacts with RPA1; leading to recruitment to chromatin and stimulate DNA primase activity. Interacts with SSBP1. Interacts with POLDIP2; leading to enhance DNA polymerase activity. Mn(2+) is required as a cofactor.

It localises to the nucleus. The protein localises to the mitochondrion matrix. It is found in the chromosome. The catalysed reaction is ssDNA + n NTP = ssDNA/pppN(pN)n-1 hybrid + (n-1) diphosphate.. The enzyme catalyses DNA(n) + a 2'-deoxyribonucleoside 5'-triphosphate = DNA(n+1) + diphosphate. Functionally, DNA primase and DNA polymerase required to tolerate replication-stalling lesions by bypassing them. Required to facilitate mitochondrial and nuclear replication fork progression by initiating de novo DNA synthesis using dNTPs and acting as an error-prone DNA polymerase able to bypass certain DNA lesions. Shows a high capacity to tolerate DNA damage lesions such as 8oxoG and abasic sites in DNA. Provides different translesion synthesis alternatives when DNA replication is stalled: able to synthesize DNA primers downstream of lesions, such as ultraviolet (UV) lesions, R-loops and G-quadruplexes, to allow DNA replication to continue. Can also realign primers ahead of 'unreadable lesions' such as abasic sites and 6-4 photoproduct (6-4 pyrimidine-pyrimidinone), thereby skipping the lesion. Repriming avoids fork degradation while leading to accumulation of internal ssDNA gaps behind the forks. Also able to incorporate nucleotides opposite DNA lesions such as 8oxoG, like a regular translesion synthesis DNA polymerase. Also required for reinitiating stalled forks after UV damage during nuclear DNA replication. Required for mitochondrial DNA (mtDNA) synthesis and replication, by reinitiating synthesis after UV damage or in the presence of chain-terminating nucleotides. Prevents APOBEC family-mediated DNA mutagenesis by repriming downstream of abasic site to prohibit error-prone translesion synthesis. Has non-overlapping function with POLH. In addition to its role in DNA damage response, also required to maintain efficient nuclear and mitochondrial DNA replication in unperturbed cells. The sequence is that of DNA-directed primase/polymerase protein from Homo sapiens (Human).